A 224-amino-acid polypeptide reads, in one-letter code: Ribonuclease 3 (224 aa).

In terms of domain architecture, RNase III spans 4 to 126 (LDRLQRQISY…IIGAISLDSS (123 aa)). Residue Glu-39 participates in Mg(2+) binding. Asp-43 is an active-site residue. Mg(2+) is bound by residues Asp-112 and Glu-115. The active site involves Glu-115. Residues 153-223 (DPKTRLQEYL…AEQILTALEI (71 aa)) form the DRBM domain.

This sequence belongs to the ribonuclease III family. In terms of assembly, homodimer. Mg(2+) is required as a cofactor.

Its subcellular location is the cytoplasm. It carries out the reaction Endonucleolytic cleavage to 5'-phosphomonoester.. Its function is as follows. Digests double-stranded RNA. Involved in the processing of primary rRNA transcript to yield the immediate precursors to the large and small rRNAs (23S and 16S). Processes some mRNAs, and tRNAs when they are encoded in the rRNA operon. Processes pre-crRNA and tracrRNA of type II CRISPR loci if present in the organism. This Mannheimia succiniciproducens (strain KCTC 0769BP / MBEL55E) protein is Ribonuclease 3.